Here is a 620-residue protein sequence, read N- to C-terminus: 1-deoxy-D-xylulose-5-phosphate synthase (620 aa).

Residues His80 and 121–123 (GHS) each bind thiamine diphosphate. Asp152 contacts Mg(2+). Residues 153 to 154 (GA), Asn181, Tyr288, and Glu370 each bind thiamine diphosphate. Mg(2+) is bound at residue Asn181.

It belongs to the transketolase family. DXPS subfamily. Homodimer. The cofactor is Mg(2+). Requires thiamine diphosphate as cofactor.

It carries out the reaction D-glyceraldehyde 3-phosphate + pyruvate + H(+) = 1-deoxy-D-xylulose 5-phosphate + CO2. It participates in metabolic intermediate biosynthesis; 1-deoxy-D-xylulose 5-phosphate biosynthesis; 1-deoxy-D-xylulose 5-phosphate from D-glyceraldehyde 3-phosphate and pyruvate: step 1/1. Functionally, catalyzes the acyloin condensation reaction between C atoms 2 and 3 of pyruvate and glyceraldehyde 3-phosphate to yield 1-deoxy-D-xylulose-5-phosphate (DXP). The sequence is that of 1-deoxy-D-xylulose-5-phosphate synthase from Escherichia coli O7:K1 (strain IAI39 / ExPEC).